A 342-amino-acid polypeptide reads, in one-letter code: Ribosomal RNA small subunit methyltransferase H (342 aa).

S-adenosyl-L-methionine contacts are provided by residues 36–38 (GGH), Asp56, Phe82, Asp100, and Gln107. Residues 309–342 (ENRESGMGKGHGAAASRFPTPDSRFPTSPNGDAP) form a disordered region. Residues 333–342 (FPTSPNGDAP) show a composition bias toward polar residues.

It belongs to the methyltransferase superfamily. RsmH family.

The protein resides in the cytoplasm. The catalysed reaction is cytidine(1402) in 16S rRNA + S-adenosyl-L-methionine = N(4)-methylcytidine(1402) in 16S rRNA + S-adenosyl-L-homocysteine + H(+). Functionally, specifically methylates the N4 position of cytidine in position 1402 (C1402) of 16S rRNA. The protein is Ribosomal RNA small subunit methyltransferase H of Xanthomonas campestris pv. campestris (strain 8004).